A 280-amino-acid polypeptide reads, in one-letter code: Nucleotide-binding protein Mfla_0145 (280 aa).

Glycine 8–serine 15 contributes to the ATP binding site. Aspartate 57–serine 60 is a GTP binding site.

It belongs to the RapZ-like family.

Functionally, displays ATPase and GTPase activities. This Methylobacillus flagellatus (strain ATCC 51484 / DSM 6875 / VKM B-1610 / KT) protein is Nucleotide-binding protein Mfla_0145.